The following is a 905-amino-acid chain: Coatomer subunit beta' (905 aa).

WD repeat units lie at residues 13 to 52 (ARSD…LVKT), 55 to 94 (VCDL…RVHM), 97 to 136 (AHSD…SCSQ), 140 to 180 (GHTH…PNFT), 183 to 224 (GHEK…CVQT), 227 to 266 (GHAQ…LEST), 350 to 388 (SCEI…NKSF), and 390 to 425 (SAQE…KSFK). At Lys-627 the chain carries N6-acetyllysine. A WD 9 repeat occupies 746-783 (IRTGRLPEAAFLARTYLPSQVSRVVKLWRENLSKVNQK). A disordered region spans residues 837-873 (EEAKGFQPSRPTAQQEPDGKPASSPVIMASQTTHKEE). Residue Ser-859 is modified to Phosphoserine. Residues 867–891 (QTTHKEEKSLLELEVDLDNLELEDI) are a coiled coil.

The protein belongs to the WD repeat COPB2 family. Oligomeric complex that consists of at least the alpha, beta, beta', gamma, delta, epsilon and zeta subunits. Probably interacts with PEX11A. Interacts with SCYL1. Interacts with JAGN1.

Its subcellular location is the cytoplasm. It is found in the cytosol. It localises to the golgi apparatus membrane. The protein resides in the cytoplasmic vesicle. The protein localises to the COPI-coated vesicle membrane. Its function is as follows. The coatomer is a cytosolic protein complex that binds to dilysine motifs and reversibly associates with Golgi non-clathrin-coated vesicles, which further mediate biosynthetic protein transport from the ER, via the Golgi up to the trans Golgi network. Coatomer complex is required for budding from Golgi membranes, and is essential for the retrograde Golgi-to-ER transport of dilysine-tagged proteins. In mammals, the coatomer can only be recruited by membranes associated to ADP-ribosylation factors (ARFs), which are small GTP-binding proteins; the complex also influences the Golgi structural integrity, as well as the processing, activity, and endocytic recycling of LDL receptors. This coatomer complex protein, essential for Golgi budding and vesicular trafficking, is a selective binding protein (RACK) for protein kinase C, epsilon type. It binds to Golgi membranes in a GTP-dependent manner. This is Coatomer subunit beta' (Copb2) from Mus musculus (Mouse).